A 643-amino-acid polypeptide reads, in one-letter code: tRNA 5-methylaminomethyl-2-thiouridine biosynthesis bifunctional protein MnmC (643 aa).

The interval 1-223 (MPDRLVSATL…VDDRLVGDYA (223 aa)) is tRNA (mnm(5)s(2)U34)-methyltransferase. The FAD-dependent cmnm(5)s(2)U34 oxidoreductase stretch occupies residues 247–643 (IGAGLAGCAV…LRARRVGSAG (397 aa)).

The protein in the N-terminal section; belongs to the methyltransferase superfamily. tRNA (mnm(5)s(2)U34)-methyltransferase family. It in the C-terminal section; belongs to the DAO family. The cofactor is FAD.

It localises to the cytoplasm. It catalyses the reaction 5-aminomethyl-2-thiouridine(34) in tRNA + S-adenosyl-L-methionine = 5-methylaminomethyl-2-thiouridine(34) in tRNA + S-adenosyl-L-homocysteine + H(+). In terms of biological role, catalyzes the last two steps in the biosynthesis of 5-methylaminomethyl-2-thiouridine (mnm(5)s(2)U) at the wobble position (U34) in tRNA. Catalyzes the FAD-dependent demodification of cmnm(5)s(2)U34 to nm(5)s(2)U34, followed by the transfer of a methyl group from S-adenosyl-L-methionine to nm(5)s(2)U34, to form mnm(5)s(2)U34. In Burkholderia orbicola (strain AU 1054), this protein is tRNA 5-methylaminomethyl-2-thiouridine biosynthesis bifunctional protein MnmC.